Consider the following 52-residue polypeptide: Insulin (52 aa).

3 cysteine pairs are disulfide-bonded: C9-C38, C21-C51, and C37-C42.

The protein belongs to the insulin family. In terms of assembly, heterodimer of a B chain and an A chain linked by two disulfide bonds.

It localises to the secreted. In terms of biological role, insulin decreases blood glucose concentration. It increases cell permeability to monosaccharides, amino acids and fatty acids. It accelerates glycolysis, the pentose phosphate cycle, and glycogen synthesis in liver. This is Insulin (ins) from Piaractus mesopotamicus (Small-scaled pacu).